Reading from the N-terminus, the 297-residue chain is uncharacterized protein (297 aa).

The tract at residues 1–29 (MAESKAKNMFQKLSLTPKRNHEHDAGRNI) is disordered. Positions 19-29 (RNHEHDAGRNI) are enriched in basic and acidic residues.

This is an uncharacterized protein from Caenorhabditis elegans.